A 110-amino-acid polypeptide reads, in one-letter code: Iron-sulfur cluster assembly protein CyaY (110 aa).

This sequence belongs to the frataxin family.

Functionally, involved in iron-sulfur (Fe-S) cluster assembly. May act as a regulator of Fe-S biogenesis. In Pseudomonas fluorescens (strain Pf0-1), this protein is Iron-sulfur cluster assembly protein CyaY.